The primary structure comprises 225 residues: UPF0758 protein Spea_3837 (225 aa).

In terms of domain architecture, MPN spans 102–224 (ILSDPDLTRD…IVSFAERGWI (123 aa)). The Zn(2+) site is built by histidine 173, histidine 175, and aspartate 186. Residues 173–186 (HNHPSGIAEPSTAD) carry the JAMM motif motif.

It belongs to the UPF0758 family.

This Shewanella pealeana (strain ATCC 700345 / ANG-SQ1) protein is UPF0758 protein Spea_3837.